Here is a 224-residue protein sequence, read N- to C-terminus: Prolactin-3D1 (224 aa).

A signal peptide spans 1 to 29 (MQLTLNLSGSAGMQLLLLVSSLLLWENVS). Cystine bridges form between cysteine 81-cysteine 199 and cysteine 216-cysteine 224. Asparagine 109 and asparagine 158 each carry an N-linked (GlcNAc...) asparagine glycan.

This sequence belongs to the somatotropin/prolactin family.

It is found in the secreted. This is Prolactin-3D1 (Prl3d1) from Mus musculus (Mouse).